The chain runs to 82 residues: Mu-conotoxin MrVIB (82 aa).

Positions 1 to 22 are cleaved as a signal peptide; that stretch reads MKLTCMMIVAVLFLTAWTLVMA. A propeptide spanning residues 23-49 is cleaved from the precursor; sequence DDSNNGLANHFLKSRDEMEDPEASKLE. Cystine bridges form between Cys-53/Cys-71, Cys-60/Cys-76, and Cys-70/Cys-81.

The protein belongs to the conotoxin O1 superfamily. In terms of tissue distribution, expressed by the venom duct.

It is found in the secreted. Its function is as follows. MuO-conotoxins are gating-modifier toxins that inhibit sodium current by trapping the domain II voltage sensor in the closed position to prevent opening of the sodium channel. This toxin has a preference for Nav1.4/SCN4A over Nav1.2/SCN2A sodium channels. It blocks Nav channels by interacting mainly with the C-terminal part of the pore loop of domain-3. It also blocks fast-inactivating calcium current. Blocks Nav1.8/SCN10A sodium channels and has potent and long-lasting local anesthetic effects. It can also block propagation of action potentials in A- and C-fibers in sciatic nerve as well as skeletal muscle in isolated preparations. This chain is Mu-conotoxin MrVIB, found in Conus marmoreus (Marble cone).